Consider the following 131-residue polypeptide: Profilin (131 aa).

The protein belongs to the profilin family. Occurs in many kinds of cells as a complex with monomeric actin in a 1:1 ratio.

Its subcellular location is the cytoplasm. The protein resides in the cytoskeleton. Binds to actin and affects the structure of the cytoskeleton. At high concentrations, profilin prevents the polymerization of actin, whereas it enhances it at low concentrations. By binding to PIP2, it inhibits the formation of IP3 and DG. This Citrus sinensis (Sweet orange) protein is Profilin.